Reading from the N-terminus, the 365-residue chain is Validamycin A dioxygenase (365 aa).

A Fe2OG dioxygenase domain is found at 174 to 284 (HATWTQSVNW…LVSLVYFFDA (111 aa)). His-203, Asp-205, and His-261 together coordinate Fe cation. The interval 331–365 (GELSLSRPGSADSPGSSPADDHPSRPGRHPAQGPQ) is disordered. Residues 336-348 (SRPGSADSPGSSP) are compositionally biased toward low complexity.

Belongs to the iron/ascorbate-dependent oxidoreductase family. Fe(2+) serves as cofactor.

The catalysed reaction is validamycin A + 2-oxoglutarate + O2 = validamycin B + succinate + CO2 + H(+). It carries out the reaction validoxylamine A + 2-oxoglutarate + O2 = validoxylamine B + succinate + CO2 + H(+). It functions in the pathway antibiotic biosynthesis. Functionally, involved in the biosynthesis of validamycin B, a component of the antifungal and antibiotic validamycin complex used as a crop protectant. Catalyzes the regioselective hydroxylation of validamycin A (4-O-beta-D-glucopyranosyl-validoxylamine A) at the C-6 position to yield validamycin B. To a lesser extent, also able to convert validoxylamine A to its hydroxylated derivative. This Streptomyces hygroscopicus subsp. limoneus protein is Validamycin A dioxygenase.